A 79-amino-acid polypeptide reads, in one-letter code: Conotoxin TsMSGL-2 (79 aa).

The first 24 residues, 1–24, serve as a signal peptide directing secretion; sequence MSGLGIMVLTLLLLVFMATSHQDA. The propeptide occupies 25–46; sequence GEKQATQRDAVNVRRRRSIAGR. 3 disulfides stabilise this stretch: C52/C64, C56/C73, and C63/C77. A Leucine amide modification is found at L78.

It belongs to the conotoxin O3 superfamily. In terms of tissue distribution, expressed by the venom duct.

The protein resides in the secreted. This Conus tessulatus (Tessellate cone) protein is Conotoxin TsMSGL-2.